A 448-amino-acid chain; its full sequence is Tubulin alpha-2 chain (448 aa).

Positions 11, 69, 138, 142, 143, 177, 204, and 226 each coordinate GTP. Glutamate 69 is a binding site for Mg(2+). The active site involves glutamate 252. Residues 428 to 448 form a disordered region; sequence KDYEEVGADSNEGGEEEGEEY. Acidic residues predominate over residues 429–448; it reads DYEEVGADSNEGGEEEGEEY.

Belongs to the tubulin family. Dimer of alpha and beta chains. A typical microtubule is a hollow water-filled tube with an outer diameter of 25 nm and an inner diameter of 15 nM. Alpha-beta heterodimers associate head-to-tail to form protofilaments running lengthwise along the microtubule wall with the beta-tubulin subunit facing the microtubule plus end conferring a structural polarity. Microtubules usually have 13 protofilaments but different protofilament numbers can be found in some organisms and specialized cells. It depends on Mg(2+) as a cofactor. In terms of processing, undergoes a tyrosination/detyrosination cycle, the cyclic removal and re-addition of a C-terminal tyrosine residue. As to expression, expressed in intestine, pharyngeal muscle cells, and a subset of neurons.

The protein localises to the cytoplasm. Its subcellular location is the cytoskeleton. It catalyses the reaction GTP + H2O = GDP + phosphate + H(+). Tubulin is the major constituent of microtubules, a cylinder consisting of laterally associated linear protofilaments composed of alpha- and beta-tubulin heterodimers. Microtubules grow by the addition of GTP-tubulin dimers to the microtubule end, where a stabilizing cap forms. Below the cap, tubulin dimers are in GDP-bound state, owing to GTPase activity of alpha-tubulin. Required for the normal dynamic behavior of the non-centrosomal microtubules in the epidermal syncytium. Involved in the redistribution of microtubule end-binding protein EB1/ebp-2 caused by wounding. Required to modulate expression in the epidermis of antimicrobial peptides, such as nlp-29, after wounding, or fungal infection. The sequence is that of Tubulin alpha-2 chain (tba-2) from Caenorhabditis elegans.